A 515-amino-acid polypeptide reads, in one-letter code: Peroxisomal catalase A (515 aa).

S2 carries the post-translational modification N-acetylserine. Catalysis depends on residues H70 and N143. Y355 provides a ligand contact to heme. The Microbody targeting signal motif lies at 513–515 (SKF).

It belongs to the catalase family. Homotetramer. It depends on heme as a cofactor.

It is found in the peroxisome matrix. It catalyses the reaction 2 H2O2 = O2 + 2 H2O. Its function is as follows. Catalyzes the degradation of hydrogen peroxide (H(2)O(2)) generated by peroxisomal oxidases to water and oxygen, thereby protecting cells from the toxic effects of hydrogen peroxide. The chain is Peroxisomal catalase A (CTA1) from Saccharomyces cerevisiae (strain ATCC 204508 / S288c) (Baker's yeast).